The following is a 195-amino-acid chain: Imidazoleglycerol-phosphate dehydratase (195 aa).

Belongs to the imidazoleglycerol-phosphate dehydratase family.

It is found in the cytoplasm. It catalyses the reaction D-erythro-1-(imidazol-4-yl)glycerol 3-phosphate = 3-(imidazol-4-yl)-2-oxopropyl phosphate + H2O. It participates in amino-acid biosynthesis; L-histidine biosynthesis; L-histidine from 5-phospho-alpha-D-ribose 1-diphosphate: step 6/9. In Burkholderia cenocepacia (strain HI2424), this protein is Imidazoleglycerol-phosphate dehydratase.